Reading from the N-terminus, the 253-residue chain is Ubiquinone/menaquinone biosynthesis C-methyltransferase UbiE (253 aa).

S-adenosyl-L-methionine is bound by residues T76, D97, 125–126, and S142; that span reads NA.

It belongs to the class I-like SAM-binding methyltransferase superfamily. MenG/UbiE family.

It catalyses the reaction a 2-demethylmenaquinol + S-adenosyl-L-methionine = a menaquinol + S-adenosyl-L-homocysteine + H(+). The enzyme catalyses a 2-methoxy-6-(all-trans-polyprenyl)benzene-1,4-diol + S-adenosyl-L-methionine = a 5-methoxy-2-methyl-3-(all-trans-polyprenyl)benzene-1,4-diol + S-adenosyl-L-homocysteine + H(+). It functions in the pathway quinol/quinone metabolism; menaquinone biosynthesis; menaquinol from 1,4-dihydroxy-2-naphthoate: step 2/2. Its pathway is cofactor biosynthesis; ubiquinone biosynthesis. In terms of biological role, methyltransferase required for the conversion of demethylmenaquinol (DMKH2) to menaquinol (MKH2) and the conversion of 2-polyprenyl-6-methoxy-1,4-benzoquinol (DDMQH2) to 2-polyprenyl-3-methyl-6-methoxy-1,4-benzoquinol (DMQH2). The sequence is that of Ubiquinone/menaquinone biosynthesis C-methyltransferase UbiE from Xylella fastidiosa (strain M12).